Consider the following 607-residue polypeptide: UvrABC system protein C (607 aa).

A GIY-YIG domain is found at 12 to 91 (DSPGVYLYKD…IKRYRPRYNI (80 aa)). One can recognise a UVR domain in the interval 200–235 (ENLIKKLKKEMAIASDNLEFERAAKLRDQILALEKI).

This sequence belongs to the UvrC family. In terms of assembly, interacts with UvrB in an incision complex.

The protein resides in the cytoplasm. In terms of biological role, the UvrABC repair system catalyzes the recognition and processing of DNA lesions. UvrC both incises the 5' and 3' sides of the lesion. The N-terminal half is responsible for the 3' incision and the C-terminal half is responsible for the 5' incision. This chain is UvrABC system protein C, found in Carboxydothermus hydrogenoformans (strain ATCC BAA-161 / DSM 6008 / Z-2901).